The sequence spans 342 residues: tRNA N6-adenosine threonylcarbamoyltransferase (342 aa).

Residues His114 and His118 each coordinate Fe cation. Substrate is bound by residues 136-140 (LVSGG), Asp169, Gly182, Asp186, and Asn275. Residue Asp301 participates in Fe cation binding.

Belongs to the KAE1 / TsaD family. Fe(2+) serves as cofactor.

Its subcellular location is the cytoplasm. The catalysed reaction is L-threonylcarbamoyladenylate + adenosine(37) in tRNA = N(6)-L-threonylcarbamoyladenosine(37) in tRNA + AMP + H(+). In terms of biological role, required for the formation of a threonylcarbamoyl group on adenosine at position 37 (t(6)A37) in tRNAs that read codons beginning with adenine. Is involved in the transfer of the threonylcarbamoyl moiety of threonylcarbamoyl-AMP (TC-AMP) to the N6 group of A37, together with TsaE and TsaB. TsaD likely plays a direct catalytic role in this reaction. This is tRNA N6-adenosine threonylcarbamoyltransferase from Streptococcus pyogenes serotype M4 (strain MGAS10750).